The primary structure comprises 1029 residues: MAEEDAEKAFFQAQTMNAESVDYKAVEEHGADSSDSDDYDPSKTLQDQYSSSMTDLKQSENVSSSASPEPNPTEQNSVQPDHDPSQPDGASYPSQTPPRDESRTSTMVPTSGTSVQPKTRTIGGFVVEDEDEDDAGDADYEPPAVLGVEDMNTVATNVPQQSVSGNENEASSTPDVSLDDAAQQSASLNNVSHNSYSPAPAVAPKSDVAVAAGQSLYNSHALQSGNVQDSATATPTPDSPSTSKGRLPHDRVGILEDRIQEDPRGDIPAWLELINEHRSRNRFDSARDVFERFLKVFPFAAEQWVAYAKMESELNDLYRLEQIFNRTLLTIPDVQLWSVYLDYVRRRNPLTTDTTGQARRIISSAYELAFQHIGVDKDSGSIWSDYVQFIKSGPGNVGGSGWQDQQKMDLLRKAYQKAICVPTQAVNTLWKEYDQFEMGLNKLTGRKFLQEQSPAYMTARSSYTELQNITRDLIRTTLPRLPPVPGSDGDIEFTQQVDIWKRWIKWEKGDPLVLKEEDPAAFKGRVVYVYKQALMALRFLPEMWFDAAEFCFLNDLESEGNEFLKQGMEANPESCLLAFKRADRLEITSESEQDPIKRGAKVREPYDKLLDALYDLIAKARTREAQDVARLEETFAKMNADNPPAKTDDDDDDQSESKARESVKNAQIDAVRKAHAIQIGILSKTISFAWIALMRAMRRIQGKGKPGETPGSRQVFADARKRGRITSDVYIASALIEYHCYKDPAATKIFERGAKLFPDDENFALEYLKHLIDINDIINARAVFEMTVRKLASNPDNVHKTKPIFAFLHEYESRYGDLVQVINLENRMRELFPEDPTLEQFAHRYSAPTFDPTAVRPIISPSQMRPKAVFPTSEQPMSRHGTPTPRYPGSVTDSPKRPLEDFDDDYNRPRKFVRAESPLKTSQRRQLDQQKRSQLSNVQTGSQFRSQGSPAPLPRDIVHLLSIIPPASAYTAGRFSPEKLVDLIRRIEMPSSISQIPLPQSARGLGTTQTPMQPFSGKASPSLSVRAVY.

Disordered stretches follow at residues 1-177 and 225-251; these read MAEE…PDVS and GNVQDSATATPTPDSPSTSKGRLPHDR. Over residues 21–32 the composition is skewed to basic and acidic residues; the sequence is VDYKAVEEHGAD. Polar residues-rich tracts occupy residues 43 to 79 and 104 to 119; these read KTLQDQYSSSMTDLKQSENVSSSASPEPNPTEQNSVQ and TSTMVPTSGTSVQPKT. A compositionally biased stretch (acidic residues) spans 127 to 140; that stretch reads VEDEDEDDAGDADY. Positions 153-175 are enriched in polar residues; sequence TVATNVPQQSVSGNENEASSTPD. Residues 229–243 show a composition bias toward low complexity; sequence DSATATPTPDSPSTS. HAT repeat units lie at residues 281 to 313, 315 to 346, 357 to 392, 406 to 439, 469 to 509, and 521 to 553; these read NRFDSARDVFERFLKVFPFAAEQWVAYAKMESE, NDLYRLEQIFNRTLLTIPDVQLWSVYLDYVRR, QARRIISSAYELAFQHIGVDKDSGSIWSDYVQFIKS, QKMDLLRKAYQKAICVPTQAVNTLWKEYDQFEMG, ITRD…WEKG, and AFKGRVVYVYKQALMALRFLPEMWFDAAEFCFL. Disordered regions lie at residues 634-664, 853-951, and 996-1023; these read TFAKMNADNPPAKTDDDDDDQSESKARESVK, TAVR…GSPA, and IPLPQSARGLGTTQTPMQPFSGKASPSL. The span at 894–908 shows a compositional bias: basic and acidic residues; the sequence is SPKRPLEDFDDDYNR. Polar residues-rich tracts occupy residues 932-949 and 1006-1023; these read RSQLSNVQTGSQFRSQGS and GTTQTPMQPFSGKASPSL.

It is found in the nucleus. The protein resides in the cytoplasm. Functionally, component of the cleavage factor IA (CFIA) complex, which is involved in the endonucleolytic cleavage during polyadenylation-dependent pre-mRNA 3'-end formation. The chain is mRNA 3'-end-processing protein rna14 (rna14) from Aspergillus fumigatus (strain ATCC MYA-4609 / CBS 101355 / FGSC A1100 / Af293) (Neosartorya fumigata).